Here is a 258-residue protein sequence, read N- to C-terminus: TLC domain-containing protein 4-A (258 aa).

6 consecutive transmembrane segments (helical) span residues 5 to 25 (LISY…FSAI), 52 to 72 (FVST…LAYD), 85 to 105 (FWVK…LLLL), 116 to 132 (YMVC…GYVL), 171 to 191 (PVLL…IAVI), and 212 to 232 (IGPQ…NVFW). The region spanning 43–245 (GKQCEWDSRF…IARGFYKVVK (203 aa)) is the TLC domain.

Belongs to the TLCD4 family.

Its subcellular location is the membrane. This is TLC domain-containing protein 4-A (tlcd4-a) from Xenopus laevis (African clawed frog).